The primary structure comprises 153 residues: Bacteriohemerythrin (153 aa).

Positions 21, 57, 61, 76, 80, 115, and 120 each coordinate Fe cation.

It belongs to the hemerythrin family. Monomer.

Its function is as follows. Oxygen-binding protein. May be involved in a storage mechanism or for delivery to oxygen-requiring enzymes. The oxygen-binding site contains two iron atoms. The sequence is that of Bacteriohemerythrin from Stenotrophomonas maltophilia (strain R551-3).